We begin with the raw amino-acid sequence, 110 residues long: U32-theraphotoxin-Cg1a (110 aa).

Positions 1-19 (MKHCFLILFTLIVFTVVWS) are cleaved as a signal peptide. The propeptide occupies 20-43 (LEENEEYPDEDEMIESFMDGYSYR). 4 cysteine pairs are disulfide-bonded: cysteine 49–cysteine 63, cysteine 56–cysteine 69, cysteine 60–cysteine 105, and cysteine 62–cysteine 80.

It belongs to the neurotoxin 03 (Tx2) family. 02 subfamily. In terms of tissue distribution, expressed by the venom gland.

It is found in the secreted. Functionally, probable ion channel inhibitor. The sequence is that of U32-theraphotoxin-Cg1a from Chilobrachys guangxiensis (Chinese earth tiger tarantula).